We begin with the raw amino-acid sequence, 162 residues long: MRPEDLQDLSLLGQKSVPYIFEYTPDVLEAFPNRHPENDYFVKFNAPEFTSLCPITNQPDFATIYISYIPDEKLVESKSLKLYLFSFRNHGDFHENCINVIGKDLVKLMEPRYLEVWGKFTPRGGISIDPYYNYGKPGTKYEKMAEHRLFNHDLYPETVDNR.

Cys-53 serves as the catalytic Thioimide intermediate. Asp-60 functions as the Proton donor in the catalytic mechanism. Residues 75 to 77 (VES) and 94 to 95 (HE) contribute to the substrate site.

This sequence belongs to the GTP cyclohydrolase I family. QueF type 1 subfamily.

It localises to the cytoplasm. The enzyme catalyses 7-aminomethyl-7-carbaguanine + 2 NADP(+) = 7-cyano-7-deazaguanine + 2 NADPH + 3 H(+). The protein operates within tRNA modification; tRNA-queuosine biosynthesis. In terms of biological role, catalyzes the NADPH-dependent reduction of 7-cyano-7-deazaguanine (preQ0) to 7-aminomethyl-7-deazaguanine (preQ1). In Exiguobacterium sp. (strain ATCC BAA-1283 / AT1b), this protein is NADPH-dependent 7-cyano-7-deazaguanine reductase.